The sequence spans 405 residues: Argininosuccinate synthase (405 aa).

ATP-binding positions include 10-18 (AYSGGLDTS) and alanine 37. Residues tyrosine 88 and serine 93 each contribute to the L-citrulline site. Glycine 118 lines the ATP pocket. L-aspartate contacts are provided by threonine 120, asparagine 124, and aspartate 125. An L-citrulline-binding site is contributed by asparagine 124. Residues arginine 128, serine 179, serine 188, glutamate 264, and tyrosine 276 each contribute to the L-citrulline site.

The protein belongs to the argininosuccinate synthase family. Type 1 subfamily. As to quaternary structure, homotetramer.

It localises to the cytoplasm. The enzyme catalyses L-citrulline + L-aspartate + ATP = 2-(N(omega)-L-arginino)succinate + AMP + diphosphate + H(+). It functions in the pathway amino-acid biosynthesis; L-arginine biosynthesis; L-arginine from L-ornithine and carbamoyl phosphate: step 2/3. This Stutzerimonas stutzeri (strain A1501) (Pseudomonas stutzeri) protein is Argininosuccinate synthase.